A 145-amino-acid chain; its full sequence is D-aminoacyl-tRNA deacylase (145 aa).

The Gly-cisPro motif, important for rejection of L-amino acids motif lies at 137 to 138; sequence GP.

This sequence belongs to the DTD family. Homodimer.

It is found in the cytoplasm. The enzyme catalyses glycyl-tRNA(Ala) + H2O = tRNA(Ala) + glycine + H(+). It catalyses the reaction a D-aminoacyl-tRNA + H2O = a tRNA + a D-alpha-amino acid + H(+). An aminoacyl-tRNA editing enzyme that deacylates mischarged D-aminoacyl-tRNAs. Also deacylates mischarged glycyl-tRNA(Ala), protecting cells against glycine mischarging by AlaRS. Acts via tRNA-based rather than protein-based catalysis; rejects L-amino acids rather than detecting D-amino acids in the active site. By recycling D-aminoacyl-tRNA to D-amino acids and free tRNA molecules, this enzyme counteracts the toxicity associated with the formation of D-aminoacyl-tRNA entities in vivo and helps enforce protein L-homochirality. The chain is D-aminoacyl-tRNA deacylase from Escherichia coli O139:H28 (strain E24377A / ETEC).